The chain runs to 431 residues: Signal recognition particle 54 kDa protein (431 aa).

GTP contacts are provided by residues 105 to 112, 185 to 189, and 243 to 246; these read GVEGSGKT, DTAGR, and TKMD.

It belongs to the GTP-binding SRP family. SRP54 subfamily. In terms of assembly, part of the signal recognition particle protein translocation system, which is composed of SRP and FtsY. Archaeal SRP consists of a 7S RNA molecule of 300 nucleotides and two protein subunits: SRP54 and SRP19.

The protein resides in the cytoplasm. It catalyses the reaction GTP + H2O = GDP + phosphate + H(+). Functionally, involved in targeting and insertion of nascent membrane proteins into the cytoplasmic membrane. Binds to the hydrophobic signal sequence of the ribosome-nascent chain (RNC) as it emerges from the ribosomes. The SRP-RNC complex is then targeted to the cytoplasmic membrane where it interacts with the SRP receptor FtsY. In Pyrobaculum calidifontis (strain DSM 21063 / JCM 11548 / VA1), this protein is Signal recognition particle 54 kDa protein.